A 200-amino-acid chain; its full sequence is uncharacterized protein (200 aa).

2 stretches are compositionally biased toward low complexity: residues 1–13 (MTSA…AAES) and 28–44 (PSPA…AGPR). Disordered regions lie at residues 1 to 116 (MTSA…GGPG) and 137 to 200 (LPRD…SSFF). The span at 88-102 (RCGRPRRRDPRRRRT) shows a compositional bias: basic residues. The span at 189–200 (PSSSSGLLSSFF) shows a compositional bias: low complexity.

This is an uncharacterized protein from Homo sapiens (Human).